A 73-amino-acid polypeptide reads, in one-letter code: Protein SlyX homolog (73 aa).

It belongs to the SlyX family.

The protein is Protein SlyX homolog of Histophilus somni (strain 2336) (Haemophilus somnus).